Reading from the N-terminus, the 541-residue chain is Tegument protein UL21 homolog (541 aa).

The protein belongs to the alphaherpesvirinae UL21 protein family. Interacts (via C-terminus) with UL16.

The protein localises to the virion tegument. It is found in the host cytoplasm. Its subcellular location is the host nucleus. Its function is as follows. May participate in DNA packaging/capsid maturation events. Promotes efficient incorporation of tegument proteins UL46, UL49, and US3 homologs into virions. May also play a role in capsid transport to the trans-Golgi network (TGN). This Homo sapiens (Human) protein is Tegument protein UL21 homolog.